Here is a 295-residue protein sequence, read N- to C-terminus: Tyrosine recombinase XerC (295 aa).

The Core-binding (CB) domain maps to 1-85; the sequence is MLTALNRYWD…ALRRFLSFLV (85 aa). In terms of domain architecture, Tyr recombinase spans 106–285; the sequence is HLPKNMDGEQ…NFQHLAEVYD (180 aa). Active-site residues include R145, K169, H237, R240, and H263. Y272 acts as the O-(3'-phospho-DNA)-tyrosine intermediate in catalysis.

This sequence belongs to the 'phage' integrase family. XerC subfamily. In terms of assembly, forms a cyclic heterotetrameric complex composed of two molecules of XerC and two molecules of XerD.

It is found in the cytoplasm. Site-specific tyrosine recombinase, which acts by catalyzing the cutting and rejoining of the recombining DNA molecules. The XerC-XerD complex is essential to convert dimers of the bacterial chromosome into monomers to permit their segregation at cell division. It also contributes to the segregational stability of plasmids. The sequence is that of Tyrosine recombinase XerC from Haemophilus influenzae (strain 86-028NP).